A 332-amino-acid polypeptide reads, in one-letter code: Phospho-N-acetylmuramoyl-pentapeptide-transferase (332 aa).

10 consecutive transmembrane segments (helical) span residues 3–23, 52–72, 74–94, 115–135, 140–160, 172–192, 197–217, 223–243, 248–268, and 311–331; these read FALM…PRFI, MGGT…ATAF, LLTG…VVGF, LALQ…GAGG, VFGH…FWLV, IDGL…VIAF, FDIL…FVYN, IFMG…ISIA, WTLL…MLQV, and VDFF…AILY.

It belongs to the glycosyltransferase 4 family. MraY subfamily. Mg(2+) serves as cofactor.

Its subcellular location is the cell membrane. It catalyses the reaction UDP-N-acetyl-alpha-D-muramoyl-L-alanyl-gamma-D-glutamyl-L-lysyl-D-alanyl-D-alanine + di-trans,octa-cis-undecaprenyl phosphate = Mur2Ac(oyl-L-Ala-gamma-D-Glu-L-Lys-D-Ala-D-Ala)-di-trans,octa-cis-undecaprenyl diphosphate + UMP. The protein operates within cell wall biogenesis; peptidoglycan biosynthesis. Functionally, catalyzes the initial step of the lipid cycle reactions in the biosynthesis of the cell wall peptidoglycan: transfers peptidoglycan precursor phospho-MurNAc-pentapeptide from UDP-MurNAc-pentapeptide onto the lipid carrier undecaprenyl phosphate, yielding undecaprenyl-pyrophosphoryl-MurNAc-pentapeptide, known as lipid I. This Streptococcus suis (strain 98HAH33) protein is Phospho-N-acetylmuramoyl-pentapeptide-transferase.